We begin with the raw amino-acid sequence, 143 residues long: Small ribosomal subunit protein eS19B (143 aa).

It belongs to the eukaryotic ribosomal protein eS19 family. As to quaternary structure, component of the small ribosomal subunit (SSU). Mature yeast ribosomes consist of a small (40S) and a large (60S) subunit. The 40S small subunit contains 1 molecule of ribosomal RNA (18S rRNA) and at least 33 different proteins. The large 60S subunit contains 3 rRNA molecules (25S, 5.8S and 5S rRNA) and at least 46 different proteins.

It is found in the cytoplasm. Its subcellular location is the nucleus. Functionally, component of the ribosome, a large ribonucleoprotein complex responsible for the synthesis of proteins in the cell. The small ribosomal subunit (SSU) binds messenger RNAs (mRNAs) and translates the encoded message by selecting cognate aminoacyl-transfer RNA (tRNA) molecules. The large subunit (LSU) contains the ribosomal catalytic site termed the peptidyl transferase center (PTC), which catalyzes the formation of peptide bonds, thereby polymerizing the amino acids delivered by tRNAs into a polypeptide chain. The nascent polypeptides leave the ribosome through a tunnel in the LSU and interact with protein factors that function in enzymatic processing, targeting, and the membrane insertion of nascent chains at the exit of the ribosomal tunnel. eS19 is required for proper maturation of the small (40S) ribosomal subunit. Binds to 40S pre-ribosomal particles, probably required after association of NOC4 but before association of ENP1, TSR1 and RIO2 with 20/21S pre-rRNA. This is Small ribosomal subunit protein eS19B (rps1902) from Schizosaccharomyces pombe (strain 972 / ATCC 24843) (Fission yeast).